The following is a 346-amino-acid chain: Methylthioribose-1-phosphate isomerase (346 aa).

Residues 45–47 (RGA), Arg-87, and Gln-194 contribute to the substrate site. Asp-235 acts as the Proton donor in catalysis. 245–246 (NK) lines the substrate pocket.

The protein belongs to the eIF-2B alpha/beta/delta subunits family. MtnA subfamily.

It carries out the reaction 5-(methylsulfanyl)-alpha-D-ribose 1-phosphate = 5-(methylsulfanyl)-D-ribulose 1-phosphate. Its pathway is amino-acid biosynthesis; L-methionine biosynthesis via salvage pathway; L-methionine from S-methyl-5-thio-alpha-D-ribose 1-phosphate: step 1/6. Functionally, catalyzes the interconversion of methylthioribose-1-phosphate (MTR-1-P) into methylthioribulose-1-phosphate (MTRu-1-P). This chain is Methylthioribose-1-phosphate isomerase, found in Syntrophomonas wolfei subsp. wolfei (strain DSM 2245B / Goettingen).